A 302-amino-acid chain; its full sequence is tRNA dimethylallyltransferase (302 aa).

Residue 9-16 participates in ATP binding; sequence GPTAAGKS. Residue 11-16 participates in substrate binding; it reads TAAGKS. The segment at 34 to 37 is interaction with substrate tRNA; it reads DSRQ.

This sequence belongs to the IPP transferase family. As to quaternary structure, monomer. It depends on Mg(2+) as a cofactor.

It catalyses the reaction adenosine(37) in tRNA + dimethylallyl diphosphate = N(6)-dimethylallyladenosine(37) in tRNA + diphosphate. Its function is as follows. Catalyzes the transfer of a dimethylallyl group onto the adenine at position 37 in tRNAs that read codons beginning with uridine, leading to the formation of N6-(dimethylallyl)adenosine (i(6)A). This chain is tRNA dimethylallyltransferase, found in Gloeobacter violaceus (strain ATCC 29082 / PCC 7421).